Reading from the N-terminus, the 234-residue chain is Lipoprotein-releasing system ATP-binding protein LolD (234 aa).

The region spanning 7-233 is the ABC transporter domain; the sequence is LQCINLCKRY…LQHHLTLVGA (227 aa). 43–50 is a binding site for ATP; it reads GSSGSGKS.

It belongs to the ABC transporter superfamily. Lipoprotein translocase (TC 3.A.1.125) family. The complex is composed of two ATP-binding proteins (LolD) and two transmembrane proteins (LolC and LolE).

Its subcellular location is the cell inner membrane. Its function is as follows. Part of the ABC transporter complex LolCDE involved in the translocation of mature outer membrane-directed lipoproteins, from the inner membrane to the periplasmic chaperone, LolA. Responsible for the formation of the LolA-lipoprotein complex in an ATP-dependent manner. This is Lipoprotein-releasing system ATP-binding protein LolD from Yersinia pestis bv. Antiqua (strain Antiqua).